The following is an 893-amino-acid chain: Desmocollin-1 (893 aa).

The N-terminal stretch at 1–29 is a signal peptide; the sequence is MAVASAAPGSIFWKQLLFSLLVLILFCDA. Residues 30–132 constitute a propeptide that is removed on maturation; that stretch reads CQKISLQVPS…KDAVLRRTKR (103 aa). 5 consecutive Cadherin domains span residues 133–240, 241–352, 353–470, 471–574, and 575–682; these read RWAP…APYF, ENKL…APYF, TETS…GPEC, QPPV…DHPP, and QIKQ…LSRE. Over 133–692 the chain is Extracellular; the sequence is RWAPIPCSLM…AALANVFLGK (560 aa). Asn-163 carries N-linked (GlcNAc...) asparagine glycosylation. Thr-383 carries the post-translational modification Phosphothreonine. 2 N-linked (GlcNAc...) asparagine glycosylation sites follow: Asn-398 and Asn-545. The chain crosses the membrane as a helical span at residues 693–715; it reads WAILAMVLGSVLLLCILFTCFCV. Residues 716-893 are Cytoplasmic-facing; that stretch reads TVKKTVKKCF…RTLAKTCVKK (178 aa).

As to quaternary structure, binds to JUP/plakoglobin. Post-translationally, isoform 1A is phosphorylated on a serine but isoform 1B is not. Epidermis and weakly in tongue papillae.

It is found in the cell membrane. It localises to the cell junction. The protein localises to the desmosome. Its function is as follows. A component of desmosome cell-cell junctions which are required for positive regulation of cellular adhesion. Required for desmosome adhesion strength between the granular layers of the epidermis, as a result moderates epidermal proliferation and differentiation. Is therefore required to maintain postnatal epidermal barrier function and normal hair follicle morphology into adulthood. This chain is Desmocollin-1 (DSC1), found in Bos taurus (Bovine).